We begin with the raw amino-acid sequence, 250 residues long: AA9 family lytic polysaccharide monooxygenase E (250 aa).

The signal sequence occupies residues 1–21 (MAMSKIMSLTGLLASASLVAG). Histidine 22 and histidine 107 together coordinate Cu(2+). Intrachain disulfides connect cysteine 77–cysteine 199 and cysteine 118–cysteine 122. N-linked (GlcNAc...) asparagine glycosylation is present at asparagine 159. The O2 site is built by histidine 185 and glutamine 194. Tyrosine 196 lines the Cu(2+) pocket.

The protein belongs to the polysaccharide monooxygenase AA9 family. Cu(2+) serves as cofactor.

It localises to the secreted. It catalyses the reaction [(1-&gt;4)-beta-D-glucosyl]n+m + reduced acceptor + O2 = 4-dehydro-beta-D-glucosyl-[(1-&gt;4)-beta-D-glucosyl]n-1 + [(1-&gt;4)-beta-D-glucosyl]m + acceptor + H2O.. Functionally, lytic polysaccharide monooxygenase (LPMO) that depolymerizes crystalline and amorphous polysaccharides via the oxidation of scissile alpha- or beta-(1-4)-glycosidic bonds, yielding C1 or C4 oxidation products. Catalysis by LPMOs requires the reduction of the active-site copper from Cu(II) to Cu(I) by a reducing agent and H(2)O(2) or O(2) as a cosubstrate. This Aspergillus tamarii protein is AA9 family lytic polysaccharide monooxygenase E.